The sequence spans 196 residues: Probable cobalt-precorrin-6B C(15)-methyltransferase (decarboxylating) (196 aa).

S-adenosyl-L-methionine contacts are provided by residues Thr24, 48 to 52 (GCGTG), Asp72, and Ala101.

This sequence belongs to the methyltransferase superfamily. Archaeal-type CbiT family.

It carries out the reaction Co-precorrin-6B + S-adenosyl-L-methionine = Co-precorrin-7 + S-adenosyl-L-homocysteine + CO2. It participates in cofactor biosynthesis; adenosylcobalamin biosynthesis; cob(II)yrinate a,c-diamide from sirohydrochlorin (anaerobic route): step 8/10. In terms of biological role, catalyzes the methylation of C-15 in cobalt-precorrin-6B followed by the decarboxylation of C-12 to form cobalt-precorrin-7. This Pyrobaculum aerophilum (strain ATCC 51768 / DSM 7523 / JCM 9630 / CIP 104966 / NBRC 100827 / IM2) protein is Probable cobalt-precorrin-6B C(15)-methyltransferase (decarboxylating).